Consider the following 21-residue polypeptide: Large ribosomal subunit protein uL29 (21 aa).

It belongs to the universal ribosomal protein uL29 family.

The protein is Large ribosomal subunit protein uL29 (rpmC) of Brevundimonas diminuta (Pseudomonas diminuta).